The following is a 346-amino-acid chain: Transcription termination factor 4, mitochondrial (346 aa).

A mitochondrion-targeting transit peptide spans 1–42 (MASLGRQVPEWHRLLALSWACLVRQTPHLREQKQMSPSLSCK). 5 MTERF repeats span residues 142-172 (FNAL…LGLG), 177-204 (KRVL…LREK), 209-239 (AQHI…YAYF), 245-270 (HLDI…YLER), and 290-318 (LRNI…VFKK). Positions 310-327 (VEEFQVFKKLLDQEEEEE) are dimerization with NSUN4. Residues 321–346 (DQEEEEESESHASEEEEEEEEEEELL) form a disordered region. Acidic residues predominate over residues 322-346 (QEEEEESESHASEEEEEEEEEEELL).

It belongs to the mTERF family. In terms of assembly, heterodimer with NSUN4; this interaction may be required for NSUN4 recruitment to the mitochondrial large ribosomal subunit. As to expression, widely expressed, with highest levels in liver, followed by testis, kidney and brain.

Its subcellular location is the mitochondrion. Regulator of mitochondrial ribosome biogenesis and translation. Binds to mitochondrial ribosomal RNAs 16S, 12S and 7S. Targets NSUN4 RNA methyltransferase to the mitochondrial large ribosomal subunit. The polypeptide is Transcription termination factor 4, mitochondrial (Mterf4) (Mus musculus (Mouse)).